A 206-amino-acid polypeptide reads, in one-letter code: Holliday junction branch migration complex subunit RuvA (206 aa).

The domain I stretch occupies residues 1–64 (MIGRLTGNLV…ETSQQLFGFI (64 aa)). The interval 65–142 (DQQDREFFRM…SWQVTPSVDA (78 aa)) is domain II. The flexible linker stretch occupies residues 143 to 154 (TGSLVALDSAAP). Residues 155-206 (SQNAIVAEAESALVALGYKPVEASKAVARVTSDEITRSEDLIRLALRNMIPA) form a domain III region.

Belongs to the RuvA family. Homotetramer. Forms an RuvA(8)-RuvB(12)-Holliday junction (HJ) complex. HJ DNA is sandwiched between 2 RuvA tetramers; dsDNA enters through RuvA and exits via RuvB. An RuvB hexamer assembles on each DNA strand where it exits the tetramer. Each RuvB hexamer is contacted by two RuvA subunits (via domain III) on 2 adjacent RuvB subunits; this complex drives branch migration. In the full resolvosome a probable DNA-RuvA(4)-RuvB(12)-RuvC(2) complex forms which resolves the HJ.

It localises to the cytoplasm. The RuvA-RuvB-RuvC complex processes Holliday junction (HJ) DNA during genetic recombination and DNA repair, while the RuvA-RuvB complex plays an important role in the rescue of blocked DNA replication forks via replication fork reversal (RFR). RuvA specifically binds to HJ cruciform DNA, conferring on it an open structure. The RuvB hexamer acts as an ATP-dependent pump, pulling dsDNA into and through the RuvAB complex. HJ branch migration allows RuvC to scan DNA until it finds its consensus sequence, where it cleaves and resolves the cruciform DNA. This Teredinibacter turnerae (strain ATCC 39867 / T7901) protein is Holliday junction branch migration complex subunit RuvA.